The sequence spans 701 residues: Type 3 secretion system secretin (701 aa).

Positions M1–A21 are cleaved as a signal peptide. A compositionally biased stretch (gly residues) spans R229–S238. The disordered stretch occupies residues R229–D252. The segment covering D240–D252 has biased composition (polar residues).

The protein belongs to the bacterial secretin family. T3SS SctC subfamily. The core secretion machinery of the T3SS is composed of approximately 20 different proteins, including cytoplasmic components, a base, an export apparatus and a needle. This subunit is part of the base, which anchors the injectisome in the bacterial cell envelope. Forms a stable homooligomeric complex.

It is found in the cell outer membrane. Component of the type III secretion system (T3SS), also called injectisome, which is used to inject bacterial effector proteins into eukaryotic host cells. Forms a ring-shaped multimeric structure with an apparent central pore in the outer membrane. Involved in the secretion of a proteinaceous elicitor of the hypersensitivity response in plants. This chain is Type 3 secretion system secretin, found in Pseudomonas syringae pv. syringae.